Reading from the N-terminus, the 262-residue chain is 3-methyl-2-oxobutanoate hydroxymethyltransferase (262 aa).

Positions 42 and 81 each coordinate Mg(2+). 3-methyl-2-oxobutanoate contacts are provided by residues aspartate 42 to serine 43, aspartate 81, and lysine 110. Glutamate 112 serves as a coordination point for Mg(2+). Glutamate 180 (proton acceptor) is an active-site residue.

This sequence belongs to the PanB family. Homodecamer; pentamer of dimers. Mg(2+) serves as cofactor.

It localises to the cytoplasm. The catalysed reaction is 3-methyl-2-oxobutanoate + (6R)-5,10-methylene-5,6,7,8-tetrahydrofolate + H2O = 2-dehydropantoate + (6S)-5,6,7,8-tetrahydrofolate. The protein operates within cofactor biosynthesis; (R)-pantothenate biosynthesis; (R)-pantoate from 3-methyl-2-oxobutanoate: step 1/2. Functionally, catalyzes the reversible reaction in which hydroxymethyl group from 5,10-methylenetetrahydrofolate is transferred onto alpha-ketoisovalerate to form ketopantoate. This Legionella pneumophila (strain Lens) protein is 3-methyl-2-oxobutanoate hydroxymethyltransferase.